A 67-amino-acid polypeptide reads, in one-letter code: Neurotoxin Cex10 (67 aa).

The region spanning 1–65 (KDGYLVEVTG…TWPLPNKSCG (65 aa)) is the LCN-type CS-alpha/beta domain. 4 disulfides stabilise this stretch: cysteine 11-cysteine 64, cysteine 15-cysteine 40, cysteine 24-cysteine 45, and cysteine 28-cysteine 47. Cysteine 64 carries the cysteine amide modification. A propeptide spanning residues 65-67 (GKK) is cleaved from the precursor.

It belongs to the long (4 C-C) scorpion toxin superfamily. Sodium channel inhibitor family. Beta subfamily. Expressed by the venom gland.

The protein localises to the secreted. Its function is as follows. Beta toxins bind voltage-independently at site-4 of sodium channels (Nav) and shift the voltage of activation toward more negative potentials thereby affecting sodium channel activation and promoting spontaneous and repetitive firing. The sequence is that of Neurotoxin Cex10 from Centruroides exilicauda (Bark scorpion).